A 714-amino-acid polypeptide reads, in one-letter code: ATP-dependent DNA helicase DinG (714 aa).

In terms of domain architecture, Helicase ATP-binding spans 17 to 294; sequence ALQDQIPDFI…TCMEQFRPKT (278 aa). 54-61 contacts ATP; that stretch reads APTGVGKT. [4Fe-4S] cluster is bound by residues cysteine 120, cysteine 194, cysteine 199, and cysteine 205. Positions 248–251 match the DEAH box motif; the sequence is DEGH. The region spanning 517–698 is the Helicase C-terminal domain; sequence HIAEMAAYFR…VFPIEQPAVP (182 aa).

This sequence belongs to the helicase family. DinG subfamily. Type 1 sub-subfamily. It depends on [4Fe-4S] cluster as a cofactor.

It catalyses the reaction Couples ATP hydrolysis with the unwinding of duplex DNA at the replication fork by translocating in the 5'-3' direction. This creates two antiparallel DNA single strands (ssDNA). The leading ssDNA polymer is the template for DNA polymerase III holoenzyme which synthesizes a continuous strand.. The catalysed reaction is ATP + H2O = ADP + phosphate + H(+). Functionally, DNA-dependent ATPase and 5'-3' DNA helicase. Unwinds D-loops, R-loops, forked DNA and G-quadruplex DNA. This chain is ATP-dependent DNA helicase DinG, found in Salmonella typhimurium (strain LT2 / SGSC1412 / ATCC 700720).